The following is a 329-amino-acid chain: Malate dehydrogenase (329 aa).

12–18 serves as a coordination point for NAD(+); sequence GAAGQIG. Residues Arg-93 and Arg-99 each contribute to the substrate site. NAD(+) is bound by residues Asn-106, Gln-113, and 130-132; that span reads VGN. Residues Asn-132 and Arg-166 each contribute to the substrate site. Catalysis depends on His-191, which acts as the Proton acceptor.

This sequence belongs to the LDH/MDH superfamily. MDH type 2 family.

It carries out the reaction (S)-malate + NAD(+) = oxaloacetate + NADH + H(+). Its function is as follows. Catalyzes the reversible oxidation of malate to oxaloacetate. In Aromatoleum aromaticum (strain DSM 19018 / LMG 30748 / EbN1) (Azoarcus sp. (strain EbN1)), this protein is Malate dehydrogenase.